Reading from the N-terminus, the 701-residue chain is MSKKRIYEYAKDLKIKSKEIIHELKKMDVEVTSHMQTLEDDQIKALDKIYKPEKAEQSEKSQQKNTQNKQQTTHNKGNQSNKGNQNNKPNNKKNNKNNKNNKNNKNNKQPKQEEPKEMPSKITYQDGITVGELAEKLNVDSSGIIKKLFLLGIMANINQSLDDETLELIVDDYGVEIEKEIVVDEEDLAIYFDDETEDENAIERPAVVTIMGHVDHGKTTLLDSIRHTKVTAGEAGGITQHIGAYQIENDGKKITFLDTPGHAAFTTMRARGAQVTDITILVVAADDGVMPQTIEAINHAKEAEVPTIVAVNKIDKPTSNPDRVMQELTEYGLIPEDWGGDTIFVPLSALSGDGIEDLLEMIVLTSEVQELKANPEKNAVGTVIEAELDKSRGPSASLLVQNGTLNVGDSLVVGNTYGRIRAMVNDLGQRIKTAGPSTPVEITGINDVPQAGDRFVVFKDEKQARRIGEARHEANVMQQRQESKSVSLDNLFEQMKQGEMKDLNVIIKGDVQGSVEALAASLMKIDVEGVNVRIIHTAVGAINESDVTLANASNGIIIGFNVRPDTGAKRAADNEGVDMRLHRVIYNVIEEIESAMKGMLDPEFEEQVIGQAEVRQTFKVSKVGTIAGSYVIDGKITRNAGVRVIRDGIVQFEGELDTLKRFKDDAKEVAQGYECGITIEKYNDLKEGDIIEAFEMVEIKR.

A compositionally biased stretch (basic and acidic residues) spans 48–62; it reads KIYKPEKAEQSEKSQ. Residues 48-123 form a disordered region; the sequence is KIYKPEKAEQ…EPKEMPSKIT (76 aa). Composition is skewed to low complexity over residues 63 to 89 and 97 to 109; these read QKNTQNKQQTTHNKGNQSNKGNQNNKP and NNKNNKNNKNNKQ. Residues 110–119 show a composition bias toward basic and acidic residues; sequence PKQEEPKEMP. Positions 203-372 constitute a tr-type G domain; the sequence is ERPAVVTIMG…VLTSEVQELK (170 aa). The segment at 212–219 is G1; the sequence is GHVDHGKT. Position 212 to 219 (212 to 219) interacts with GTP; sequence GHVDHGKT. The interval 237 to 241 is G2; sequence GITQH. The G3 stretch occupies residues 258–261; sequence DTPG. Residues 258–262 and 312–315 each bind GTP; these read DTPGH and NKID. Positions 312-315 are G4; the sequence is NKID. Residues 348-350 are G5; sequence SAL.

Belongs to the TRAFAC class translation factor GTPase superfamily. Classic translation factor GTPase family. IF-2 subfamily.

It is found in the cytoplasm. In terms of biological role, one of the essential components for the initiation of protein synthesis. Protects formylmethionyl-tRNA from spontaneous hydrolysis and promotes its binding to the 30S ribosomal subunits. Also involved in the hydrolysis of GTP during the formation of the 70S ribosomal complex. The protein is Translation initiation factor IF-2 of Staphylococcus saprophyticus subsp. saprophyticus (strain ATCC 15305 / DSM 20229 / NCIMB 8711 / NCTC 7292 / S-41).